A 176-amino-acid polypeptide reads, in one-letter code: ATP-dependent protease subunit HslV (176 aa).

The active site involves Thr5. Residues Ser161, Cys164, and Thr167 each contribute to the Na(+) site.

The protein belongs to the peptidase T1B family. HslV subfamily. A double ring-shaped homohexamer of HslV is capped on each side by a ring-shaped HslU homohexamer. The assembly of the HslU/HslV complex is dependent on binding of ATP.

Its subcellular location is the cytoplasm. It carries out the reaction ATP-dependent cleavage of peptide bonds with broad specificity.. Its activity is regulated as follows. Allosterically activated by HslU binding. Functionally, protease subunit of a proteasome-like degradation complex believed to be a general protein degrading machinery. The protein is ATP-dependent protease subunit HslV of Caldanaerobacter subterraneus subsp. tengcongensis (strain DSM 15242 / JCM 11007 / NBRC 100824 / MB4) (Thermoanaerobacter tengcongensis).